Reading from the N-terminus, the 365-residue chain is IgG receptor FcRn large subunit p51 (365 aa).

A signal peptide spans 1–23 (MGVPRPQPWALGLLLFLLPGSLG). Residues 24–110 (AESHLSLLYH…AFKALGGKGP (87 aa)) form an alpha-1 region. Topologically, residues 24–297 (AESHLSLLYH…VELESPAKSS (274 aa)) are extracellular. The interval 111-200 (YTLQGLLGCE…ERGRGNLEWK (90 aa)) is alpha-2. 2 cysteine pairs are disulfide-bonded: C119–C182 and C221–C275. A glycan (N-linked (GlcNAc...) asparagine) is linked at N125. The alpha-3 stretch occupies residues 201 to 290 (EPPSMRLKAR…GLAQPLRVEL (90 aa)). The Ig-like C1-type domain occupies 202–289 (PPSMRLKARP…AGLAQPLRVE (88 aa)). The tract at residues 291–297 (ESPAKSS) is connecting peptide. A helical transmembrane segment spans residues 298–321 (VLVVGIVIGVLLLTAAAVGGALLW). Residues 322-365 (RRMRSGLPAPWISLRGDDTGVLLPTPGEAQDADLKDVNVIPATA) are Cytoplasmic-facing. The residue at position 334 (S334) is a Phosphoserine.

It belongs to the immunoglobulin superfamily. In terms of assembly, fcRn complex consists of two subunits: p51, and p14 which is equivalent to beta-2-microglobulin. It forms an MHC class I-like heterodimer. Interacts with albumin/ALB; this interaction regulates ALB homeostasis. As to quaternary structure, (Microbial infection) Interacts with Echovirus 6, Echovirus 11 and Echovirus 30 capsid protein VP1. As to expression, expressed in full-term placenta, heart, lung, liver, muscle, kidney, pancreas, and both fetal and adult small intestine.

The protein resides in the cell membrane. It is found in the endosome membrane. Its function is as follows. Cell surface receptor that transfers passive humoral immunity from the mother to the newborn. Binds to the Fc region of monomeric immunoglobulin gamma and mediates its selective uptake from milk. IgG in the milk is bound at the apical surface of the intestinal epithelium. The resultant FcRn-IgG complexes are transcytosed across the intestinal epithelium and IgG is released from FcRn into blood or tissue fluids. Throughout life, contributes to effective humoral immunity by recycling IgG and extending its half-life in the circulation. Mechanistically, monomeric IgG binding to FcRn in acidic endosomes of endothelial and hematopoietic cells recycles IgG to the cell surface where it is released into the circulation. In addition of IgG, regulates homeostasis of the other most abundant circulating protein albumin/ALB. (Microbial infection) Acts as an uncoating receptor for a panel of echoviruses including Echovirus 5, 6, 7, 9, 11, 13, 25 and 29. The protein is IgG receptor FcRn large subunit p51 (FCGRT) of Homo sapiens (Human).